The sequence spans 752 residues: DNA helicase/primase complex-associated protein (752 aa).

Belongs to the herpesviridae HEPA family. As to quaternary structure, associates with the primase and the helicase to form the helicase-primase complex. Interacts with the origin-binding protein. Interacts with the polymerase catalytic subunit.

The protein resides in the host nucleus. Functionally, component of the helicase/primase complex. Unwinds the DNA at the replication forks and generates single-stranded DNA for both leading and lagging strand synthesis. The primase synthesizes short RNA primers on the lagging strand that the polymerase presumably elongates using dNTPs. The primase-associated factor has no known catalytic activity in the complex and may serve to facilitate the formation of the replisome by directly interacting with the origin-binding protein and the polymerase. The polypeptide is DNA helicase/primase complex-associated protein (Homo sapiens (Human)).